Consider the following 409-residue polypeptide: MVPVSLGCAMQSPWQLVSGGVTSPQGFQASGIAAGLKPSGKLDMALLLAPEQAVCAGSFTTSVVRAACVDLCAERLAANGGQARAVLINSGQANACTGDRGLIDSQRATQALADQLGLDAEALLICSTGVIGVPIPMPKLLAGLDPLVAALSATGGEAAATAILTTDLVSKQVALEAELGGRRVRIGGIAKGSGMIHPDMATMLGFFSCDAGLDPSIWKAMVGQAVQRSFNAITVDGDTSTNDTVLAFAAGDPLDSVHHAALEQGLTEAMQHLAKAIARDGEGATCLIEVQVEGALDEPSAQRVARTIVGSSLVKTAVHGRDPNWGRIVAAAGRSGVPFDPEQVALWIGPHQLMQSGQPLSFDPEAASRVLRSETVQIRIQLGDGPGNGLAWGCDLSDQYVRINADYTT.

T165, K191, T202, E282, N404, and T409 together coordinate substrate. T202 (nucleophile) is an active-site residue.

The protein belongs to the ArgJ family. In terms of assembly, heterotetramer of two alpha and two beta chains.

The protein resides in the cytoplasm. The enzyme catalyses N(2)-acetyl-L-ornithine + L-glutamate = N-acetyl-L-glutamate + L-ornithine. It catalyses the reaction L-glutamate + acetyl-CoA = N-acetyl-L-glutamate + CoA + H(+). It functions in the pathway amino-acid biosynthesis; L-arginine biosynthesis; L-ornithine and N-acetyl-L-glutamate from L-glutamate and N(2)-acetyl-L-ornithine (cyclic): step 1/1. The protein operates within amino-acid biosynthesis; L-arginine biosynthesis; N(2)-acetyl-L-ornithine from L-glutamate: step 1/4. In terms of biological role, catalyzes two activities which are involved in the cyclic version of arginine biosynthesis: the synthesis of N-acetylglutamate from glutamate and acetyl-CoA as the acetyl donor, and of ornithine by transacetylation between N(2)-acetylornithine and glutamate. The polypeptide is Arginine biosynthesis bifunctional protein ArgJ (Parasynechococcus marenigrum (strain WH8102)).